Consider the following 1323-residue polypeptide: Glutamate receptor ionotropic, NMDA 2D (1323 aa).

The first 27 residues, 1–27 (MRGAGGPRGPRGPAKMLLLLALACASP), serve as a signal peptide directing secretion. Residues 28-579 (FPEEVPGPGA…SPSAFLEPYS (552 aa)) are Extracellular-facing. Residue Asn-89 is glycosylated (N-linked (GlcNAc...) asparagine). An intrachain disulfide couples Cys-101 to Cys-345. Asn-349, Asn-363, Asn-381, and Asn-464 each carry an N-linked (GlcNAc...) asparagine glycan. 2 disulfides stabilise this stretch: Cys-452-Cys-480 and Cys-459-Cys-481. Positions 536, 538, and 543 each coordinate L-glutamate. An N-linked (GlcNAc...) asparagine glycan is attached at Asn-566. Residues 580–601 (PAVWVMMFVMCLTVVAVTVFIF) traverse the membrane as a helical segment. Topologically, residues 602 to 626 (EYLSPVGYNRSLATGKRPGGSTFTI) are cytoplasmic. The segment at residues 627-638 (GKSIWLLWALVF) is an intramembrane region (discontinuously helical). A pore-forming region spans residues 628-647 (KSIWLLWALVFNNSVPVENP). The Cytoplasmic portion of the chain corresponds to 639 to 650 (NNSVPVENPRGT). The helical transmembrane segment at 651–671 (TSKIMVLVWAFFAVIFLASYT) threads the bilayer. Over 672–840 (ANLAAFMIQE…EVMSSKLDID (169 aa)) the chain is Extracellular. Asn-712 carries N-linked (GlcNAc...) asparagine glycosylation. Residues Ser-714, Thr-715, and Asp-756 each coordinate L-glutamate. Residues Cys-770 and Cys-825 are joined by a disulfide bond. Residues 841–864 (NMAGVFYMLLVAMGLSLLVFAWEH) traverse the membrane as a helical segment. Topologically, residues 865-1323 (LVYWRLRHCL…AHFSSLESEV (459 aa)) are cytoplasmic. 3 disordered regions span residues 897–952 (EAAP…PGGA), 977–1112 (AAPR…SLGG), and 1201–1323 (PWAA…ESEV). Positions 899-929 (APPPAKPPPPPQPLPSPAYPAARPPPGPAPF) are enriched in pro residues. A compositionally biased stretch (basic and acidic residues) spans 931 to 940 (PRERAAADRW). A compositionally biased stretch (low complexity) spans 977 to 986 (AAPRGAAGRP). Pro residues predominate over residues 987 to 1001 (LSPPTTQPPQKPPPS). Low complexity predominate over residues 1030–1039 (AAAAAAVGPP). A compositionally biased stretch (pro residues) spans 1080–1092 (TAPPPRRAAPPPC). The span at 1208–1228 (PRRRARCGCPRPHPHRPRASH) shows a compositional bias: basic residues. Arg-1303 is subject to Omega-N-methylarginine. Ser-1313 carries the post-translational modification Phosphoserine. The PDZ-binding motif lies at 1321 to 1323 (SEV).

Belongs to the glutamate-gated ion channel (TC 1.A.10.1) family. NR2D/GRIN2D subfamily. In terms of assembly, heterotetramer. Forms heterotetrameric channels composed of two GluN1/zeta subunits (GRIN1), and two identical GluN2/epsilon subunits (GRIN2A, GRIN2B, GRIN2C or GRIN2D) or GluN3 subunits (GRIN3A or GRIN3B) (in vitro). In vivo, the subunit composition may depend on the expression levels of the different subunits. Interacts with PDZ domains of PATJ and DLG4. In terms of tissue distribution, expressed in brain, mainly in the subcortical region.

The protein resides in the cell membrane. The protein localises to the postsynaptic cell membrane. The catalysed reaction is Ca(2+)(in) = Ca(2+)(out). It carries out the reaction Na(+)(in) = Na(+)(out). It catalyses the reaction K(+)(in) = K(+)(out). Functionally, component of N-methyl-D-aspartate (NMDA) receptors (NMDARs) that function as heterotetrameric, ligand-gated cation channels with high calcium permeability and voltage-dependent block by Mg(2+). Participates in synaptic plasticity for learning and memory formation. Channel activation requires binding of the neurotransmitter L-glutamate to the GluN2 subunit, glycine or D-serine binding to the GluN1 subunit, plus membrane depolarization to eliminate channel inhibition by Mg(2+). NMDARs mediate simultaneously the potasium efflux and the influx of calcium and sodium. Each GluN2 subunit confers differential attributes to channel properties, including activation, deactivation and desensitization kinetics, pH sensitivity, Ca2(+) permeability, and binding to allosteric modulators. This is Glutamate receptor ionotropic, NMDA 2D from Rattus norvegicus (Rat).